The following is a 376-amino-acid chain: Anhydro-N-acetylmuramic acid kinase (376 aa).

ATP is bound at residue 22–29 (GTSMDGAD).

Belongs to the anhydro-N-acetylmuramic acid kinase family.

It carries out the reaction 1,6-anhydro-N-acetyl-beta-muramate + ATP + H2O = N-acetyl-D-muramate 6-phosphate + ADP + H(+). The protein operates within amino-sugar metabolism; 1,6-anhydro-N-acetylmuramate degradation. It participates in cell wall biogenesis; peptidoglycan recycling. Functionally, catalyzes the specific phosphorylation of 1,6-anhydro-N-acetylmuramic acid (anhMurNAc) with the simultaneous cleavage of the 1,6-anhydro ring, generating MurNAc-6-P. Is required for the utilization of anhMurNAc either imported from the medium or derived from its own cell wall murein, and thus plays a role in cell wall recycling. In Neisseria gonorrhoeae (strain NCCP11945), this protein is Anhydro-N-acetylmuramic acid kinase.